We begin with the raw amino-acid sequence, 568 residues long: MSASVFNRCWSKVILETLSRQGVSHFCIAPGSRSTPLTLEAIRLQENGRGTCHTHFDERGLGFFALGIAKASKKPVAVIVTSGTATANLYPAIIEARQTDVPLIILTADRPPELLECGANQAILQQNMFAQYPIASINLPRPSQNYSAQWLISVLDQACFRQKQGGVIHINVPFAEPLYNANNDEIDLHPWLSNIQSWLTQNKNWIQHQEQHTEVITHKYWDQWRTKKGIIIVGRLPSEQAMGIAEWAENMGWIMITDIQSHVKPTLPYADIWLANQTVRKKLLQAEIVIQFGSGFIGKRINQFLAEFKGEYWIIENNQKAVDPYHHAHTRFNAKPHHWLRAHPPMRKKPWLLEPLALAKFCADFIKQRVGSNLNEASLAHNIELLLPKSNSVLFLGNSLFVRLADALSQPSANYPIYTNRGASGIDGLLATAAGIAVGSEQTLVAMIGDTSTLYDLNSFALFKQLNQPAIIFVINNNGGAIFDMLPVDIAVKEKYYRMSHYLEFSHIAAMFDLKYARPYTWADLATVLKQAYSRRETTIIEIKINPNDGSNIYKDLIDKIGHALIGV.

It belongs to the TPP enzyme family. MenD subfamily. As to quaternary structure, homodimer. The cofactor is Mg(2+). Requires Mn(2+) as cofactor. It depends on thiamine diphosphate as a cofactor.

It carries out the reaction isochorismate + 2-oxoglutarate + H(+) = 5-enolpyruvoyl-6-hydroxy-2-succinyl-cyclohex-3-ene-1-carboxylate + CO2. It participates in quinol/quinone metabolism; 1,4-dihydroxy-2-naphthoate biosynthesis; 1,4-dihydroxy-2-naphthoate from chorismate: step 2/7. Its pathway is quinol/quinone metabolism; menaquinone biosynthesis. In terms of biological role, catalyzes the thiamine diphosphate-dependent decarboxylation of 2-oxoglutarate and the subsequent addition of the resulting succinic semialdehyde-thiamine pyrophosphate anion to isochorismate to yield 2-succinyl-5-enolpyruvyl-6-hydroxy-3-cyclohexene-1-carboxylate (SEPHCHC). This Histophilus somni (strain 2336) (Haemophilus somnus) protein is 2-succinyl-5-enolpyruvyl-6-hydroxy-3-cyclohexene-1-carboxylate synthase.